The sequence spans 823 residues: Translation initiation factor IF-2 (823 aa).

Disordered regions lie at residues 30–66 (VPPSLARGTSTGKSFTTVEVRSKKRRPGEYISHDDKR) and 156–192 (TPSHSNKSGHDDRGGKKYAHGATGRHKEKEGVSIKKV). Positions 36–48 (RGTSTGKSFTTVE) are enriched in polar residues. Basic and acidic residues predominate over residues 56 to 66 (PGEYISHDDKR). Residues 322-491 (PRPPVVTVMG…LLLAEMLELS (170 aa)) form the tr-type G domain. Positions 331 to 338 (GHVDHGKT) are G1. 331-338 (GHVDHGKT) serves as a coordination point for GTP. The segment at 356-360 (GITQH) is G2. Residues 377–380 (DTPG) form a G3 region. GTP contacts are provided by residues 377 to 381 (DTPGH) and 431 to 434 (NKID). Positions 431–434 (NKID) are G4. Residues 467 to 469 (SAK) are G5.

The protein belongs to the TRAFAC class translation factor GTPase superfamily. Classic translation factor GTPase family. IF-2 subfamily.

Its subcellular location is the cytoplasm. In terms of biological role, one of the essential components for the initiation of protein synthesis. Protects formylmethionyl-tRNA from spontaneous hydrolysis and promotes its binding to the 30S ribosomal subunits. Also involved in the hydrolysis of GTP during the formation of the 70S ribosomal complex. The protein is Translation initiation factor IF-2 of Anaplasma phagocytophilum (strain HZ).